The primary structure comprises 64 residues: Translation machinery-associated protein 7 homolog (64 aa).

Residues 1-64 form a disordered region; it reads MTGREGGKKK…TGGIKKSGKK (64 aa). The stretch at 21–50 forms a coiled coil; the sequence is EMDEEDMAFKQKQKEQQKAMEAAKQKAAKG. A compositionally biased stretch (basic and acidic residues) spans 27–44; the sequence is MAFKQKQKEQQKAMEAAK.

It belongs to the TMA7 family.

In Aedes aegypti (Yellowfever mosquito), this protein is Translation machinery-associated protein 7 homolog.